The following is a 163-amino-acid chain: 2-C-methyl-D-erythritol 2,4-cyclodiphosphate synthase (163 aa).

D9 and H11 together coordinate a divalent metal cation. Residues 9-11 and 36-37 contribute to the 4-CDP-2-C-methyl-D-erythritol 2-phosphate site; these read DVH and HS. An a divalent metal cation-binding site is contributed by H44. 4-CDP-2-C-methyl-D-erythritol 2-phosphate contacts are provided by residues 58–60, 63–67, 134–137, F141, and R144; these read DIG, FPDDD, and TTSE.

This sequence belongs to the IspF family. Homotrimer. The cofactor is a divalent metal cation.

It catalyses the reaction 4-CDP-2-C-methyl-D-erythritol 2-phosphate = 2-C-methyl-D-erythritol 2,4-cyclic diphosphate + CMP. It participates in isoprenoid biosynthesis; isopentenyl diphosphate biosynthesis via DXP pathway; isopentenyl diphosphate from 1-deoxy-D-xylulose 5-phosphate: step 4/6. Its function is as follows. Involved in the biosynthesis of isopentenyl diphosphate (IPP) and dimethylallyl diphosphate (DMAPP), two major building blocks of isoprenoid compounds. Catalyzes the conversion of 4-diphosphocytidyl-2-C-methyl-D-erythritol 2-phosphate (CDP-ME2P) to 2-C-methyl-D-erythritol 2,4-cyclodiphosphate (ME-CPP) with a corresponding release of cytidine 5-monophosphate (CMP). In Halorhodospira halophila (strain DSM 244 / SL1) (Ectothiorhodospira halophila (strain DSM 244 / SL1)), this protein is 2-C-methyl-D-erythritol 2,4-cyclodiphosphate synthase.